The following is a 445-amino-acid chain: FAS-associated factor 2-B (445 aa).

The 37-residue stretch at 12–48 (DQTEKLLQFQDLTGIESIDQCRQTLQQHNWNIETAVQ) folds into the UBA domain. Residues 275 to 353 (SERLEREERN…ERKSECLPAE (79 aa)) adopt a coiled-coil conformation. The interval 302-355 (RADQEKERKKKEKQDQKRREEEEAQRKQMLEERKKRNLEEEKERKSECLPAEPV) is disordered. Over residues 303-348 (ADQEKERKKKEKQDQKRREEEEAQRKQMLEERKKRNLEEEKERKSE) the composition is skewed to basic and acidic residues. A UBX domain is found at 357-439 (DHPDNVKIIF…GLSQSQLLFV (83 aa)).

It is found in the cytoplasm. It localises to the lipid droplet. The protein resides in the endoplasmic reticulum. Plays an important role in endoplasmic reticulum-associated degradation (ERAD) that mediates ubiquitin-dependent degradation of misfolded endoplasmic reticulum proteins. Involved in inhibition of lipid droplet degradation. Involved in stress granule disassembly. The polypeptide is FAS-associated factor 2-B (faf2-b) (Xenopus laevis (African clawed frog)).